The sequence spans 502 residues: UPF0371 protein CLK_3516 (502 aa).

This sequence belongs to the UPF0371 family.

The chain is UPF0371 protein CLK_3516 from Clostridium botulinum (strain Loch Maree / Type A3).